Consider the following 274-residue polypeptide: Cytochrome b-c1 complex subunit Rieske, mitochondrial (274 aa).

The Mitochondrial matrix segment spans residues 79–103; that stretch reads SHTDIKVPDFSEYRRLEVLDSTKSS. The chain crosses the membrane as a helical span at residues 104–140; the sequence is RESSEARKGFSYLVTGVTTVGVAYAAKNAVTQFVSSM. Over 141 to 274 the chain is Mitochondrial intermembrane; sequence SASADVLALA…FTSDDMVIVG (134 aa). The region spanning 187-272 is the Rieske domain; sequence EAAVELSQLR…YEFTSDDMVI (86 aa). [2Fe-2S] cluster contacts are provided by C217, H219, C236, H239, and S241. C222 and C238 form a disulfide bridge.

It belongs to the Rieske iron-sulfur protein family. As to quaternary structure, component of the ubiquinol-cytochrome c oxidoreductase (cytochrome b-c1 complex, complex III, CIII), a multisubunit enzyme composed of 11 subunits. The complex is composed of 3 respiratory subunits cytochrome b, cytochrome c1 and Rieske protein UQCRFS1, 2 core protein subunits UQCRC1/QCR1 and UQCRC2/QCR2, and 6 low-molecular weight protein subunits UQCRH/QCR6, UQCRB/QCR7, UQCRQ/QCR8, UQCR10/QCR9, UQCR11/QCR10 and subunit 9, the cleavage product of Rieske protein UQCRFS1. The complex exists as an obligatory dimer and forms supercomplexes (SCs) in the inner mitochondrial membrane with NADH-ubiquinone oxidoreductase (complex I, CI) and cytochrome c oxidase (complex IV, CIV), resulting in different assemblies (supercomplex SCI(1)III(2)IV(1) and megacomplex MCI(2)III(2)IV(2)). Incorporation of the Rieske protein UQCRFS1 is the penultimate step in complex III assembly. Interacts with TTC19, which is involved in the clearance of UQCRFS1 fragments. In terms of assembly, component of the ubiquinol-cytochrome c oxidoreductase (cytochrome b-c1 complex, complex III, CIII). Subunit 9 corresponds to the mitochondrial targeting sequence (MTS) of Rieske protein UQCRFS1. It is retained after processing and incorporated inside complex III, where it remains bound to the complex and localizes between the 2 core subunits UQCRC1/QCR1 and UQCRC2/QCR2. [2Fe-2S] cluster serves as cofactor. In terms of processing, proteolytic processing is necessary for the correct insertion of UQCRFS1 in the complex III dimer. Several fragments are generated during UQCRFS1 insertion, most probably due to the endogenous matrix-processing peptidase (MPP) activity of the 2 core protein subunits UQCRC1/QCR1 and UQCRC2/QCR2, which are homologous to the 2 mitochondrial-processing peptidase (MPP) subunits beta-MPP and alpha-MPP respectively. The action of the protease is also necessary for the clearance of the UQCRFS1 fragments.

It localises to the mitochondrion inner membrane. The enzyme catalyses a quinol + 2 Fe(III)-[cytochrome c](out) = a quinone + 2 Fe(II)-[cytochrome c](out) + 2 H(+)(out). In terms of biological role, component of the ubiquinol-cytochrome c oxidoreductase, a multisubunit transmembrane complex that is part of the mitochondrial electron transport chain which drives oxidative phosphorylation. The respiratory chain contains 3 multisubunit complexes succinate dehydrogenase (complex II, CII), ubiquinol-cytochrome c oxidoreductase (cytochrome b-c1 complex, complex III, CIII) and cytochrome c oxidase (complex IV, CIV), that cooperate to transfer electrons derived from NADH and succinate to molecular oxygen, creating an electrochemical gradient over the inner membrane that drives transmembrane transport and the ATP synthase. The cytochrome b-c1 complex catalyzes electron transfer from ubiquinol to cytochrome c, linking this redox reaction to translocation of protons across the mitochondrial inner membrane, with protons being carried across the membrane as hydrogens on the quinol. In the process called Q cycle, 2 protons are consumed from the matrix, 4 protons are released into the intermembrane space and 2 electrons are passed to cytochrome c. The Rieske protein is a catalytic core subunit containing a [2Fe-2S] iron-sulfur cluster. It cycles between 2 conformational states during catalysis to transfer electrons from the quinol bound in the Q(0) site in cytochrome b to cytochrome c1. Incorporation of UQCRFS1 is the penultimate step in complex III assembly. Functionally, component of the ubiquinol-cytochrome c oxidoreductase (cytochrome b-c1 complex, complex III, CIII). UQCRFS1 undergoes proteolytic processing once it is incorporated in the complex III dimer. One of the fragments, called subunit 9, corresponds to its mitochondrial targeting sequence (MTS). The proteolytic processing is necessary for the correct insertion of UQCRFS1 in the complex III dimer, but the persistence of UQCRFS1-derived fragments may prevent newly imported UQCRFS1 to be processed and assembled into complex III and is detrimental for the complex III structure and function. In Gorilla gorilla gorilla (Western lowland gorilla), this protein is Cytochrome b-c1 complex subunit Rieske, mitochondrial (UQCRFS1).